Reading from the N-terminus, the 319-residue chain is Lipase 1 (319 aa).

The active-site Nucleophile is the S189. D314 and D317 together coordinate Ca(2+).

It catalyses the reaction a triacylglycerol + H2O = a diacylglycerol + a fatty acid + H(+). This Moraxella sp. (strain TA144) protein is Lipase 1 (lip1).